The chain runs to 438 residues: MLKYDKNIQSVRGMHDYLPKDTILWQYIENILITILDSYGYKEIRFPIIEDTNLFKRSIGEVTDVIEKEMYNFTDRNGNNLTLRPEGTSGCVRAGIKHGLFYHQEQRLWYLGPMFRYERPQKGRYRQFHQFSAEAFGQIGPDIDAELILITARCWKKLGINHHLSLELNSIGSLSSRINYRKKLITFLEKNLSNLDSNALRRLYSNPLRILDTKNTKTKELLLNAPILSDYLDDDSRVHFSELCQLLNLLGVPYRVNPYLVRGLDYYNKTVFEWVTDSLGVKKTICAGGRYDELVQELGGYSAPAIGFSIGLERVILLIQEINNISILHKNIYIDVYFISIGDNSRKHAMLLSENIRSTLPSLRLMVHHGGDDIKKQFYCANKHKPQIVLIMNEKNALDKTIILKNLQSKTQEILKHDAVSERLKHILHITCNSTDNK.

The protein belongs to the class-II aminoacyl-tRNA synthetase family. In terms of assembly, homodimer.

It is found in the cytoplasm. It catalyses the reaction tRNA(His) + L-histidine + ATP = L-histidyl-tRNA(His) + AMP + diphosphate + H(+). The sequence is that of Histidine--tRNA ligase from Blochmanniella pennsylvanica (strain BPEN).